A 522-amino-acid chain; its full sequence is 2-isopropylmalate synthase (522 aa).

Positions valine 5–histidine 267 constitute a Pyruvate carboxyltransferase domain. Mn(2+)-binding residues include aspartate 14, histidine 202, histidine 204, and asparagine 238. Positions glutamine 392–valine 522 are regulatory domain.

This sequence belongs to the alpha-IPM synthase/homocitrate synthase family. LeuA type 1 subfamily. As to quaternary structure, homodimer. Requires Mn(2+) as cofactor.

The protein localises to the cytoplasm. It carries out the reaction 3-methyl-2-oxobutanoate + acetyl-CoA + H2O = (2S)-2-isopropylmalate + CoA + H(+). Its pathway is amino-acid biosynthesis; L-leucine biosynthesis; L-leucine from 3-methyl-2-oxobutanoate: step 1/4. In terms of biological role, catalyzes the condensation of the acetyl group of acetyl-CoA with 3-methyl-2-oxobutanoate (2-ketoisovalerate) to form 3-carboxy-3-hydroxy-4-methylpentanoate (2-isopropylmalate). This Shewanella baltica (strain OS185) protein is 2-isopropylmalate synthase.